Reading from the N-terminus, the 436-residue chain is Histidinol dehydrogenase (436 aa).

Positions 242, 264, and 267 each coordinate substrate. Positions 264 and 267 each coordinate Zn(2+). Catalysis depends on proton acceptor residues glutamate 332 and histidine 333. Residues histidine 333, aspartate 366, glutamate 420, and histidine 425 each contribute to the substrate site. Aspartate 366 contributes to the Zn(2+) binding site. Residue histidine 425 coordinates Zn(2+).

The protein belongs to the histidinol dehydrogenase family. The cofactor is Zn(2+).

It catalyses the reaction L-histidinol + 2 NAD(+) + H2O = L-histidine + 2 NADH + 3 H(+). It functions in the pathway amino-acid biosynthesis; L-histidine biosynthesis; L-histidine from 5-phospho-alpha-D-ribose 1-diphosphate: step 9/9. In terms of biological role, catalyzes the sequential NAD-dependent oxidations of L-histidinol to L-histidinaldehyde and then to L-histidine. This chain is Histidinol dehydrogenase, found in Nitratidesulfovibrio vulgaris (strain ATCC 29579 / DSM 644 / CCUG 34227 / NCIMB 8303 / VKM B-1760 / Hildenborough) (Desulfovibrio vulgaris).